The primary structure comprises 292 residues: 4-diphosphocytidyl-2-C-methyl-D-erythritol kinase (292 aa).

The active site involves Lys20. 103–113 (PMGGGIGGGSS) contacts ATP. Asp145 is an active-site residue.

It belongs to the GHMP kinase family. IspE subfamily.

It carries out the reaction 4-CDP-2-C-methyl-D-erythritol + ATP = 4-CDP-2-C-methyl-D-erythritol 2-phosphate + ADP + H(+). The protein operates within isoprenoid biosynthesis; isopentenyl diphosphate biosynthesis via DXP pathway; isopentenyl diphosphate from 1-deoxy-D-xylulose 5-phosphate: step 3/6. Catalyzes the phosphorylation of the position 2 hydroxy group of 4-diphosphocytidyl-2C-methyl-D-erythritol. The protein is 4-diphosphocytidyl-2-C-methyl-D-erythritol kinase of Cupriavidus taiwanensis (strain DSM 17343 / BCRC 17206 / CCUG 44338 / CIP 107171 / LMG 19424 / R1) (Ralstonia taiwanensis (strain LMG 19424)).